The sequence spans 135 residues: Large ribosomal subunit protein uL22 (135 aa).

The protein belongs to the universal ribosomal protein uL22 family. In terms of assembly, part of the 50S ribosomal subunit.

This protein binds specifically to 23S rRNA; its binding is stimulated by other ribosomal proteins, e.g. L4, L17, and L20. It is important during the early stages of 50S assembly. It makes multiple contacts with different domains of the 23S rRNA in the assembled 50S subunit and ribosome. Its function is as follows. The globular domain of the protein is located near the polypeptide exit tunnel on the outside of the subunit, while an extended beta-hairpin is found that lines the wall of the exit tunnel in the center of the 70S ribosome. This is Large ribosomal subunit protein uL22 from Christiangramia forsetii (strain DSM 17595 / CGMCC 1.15422 / KT0803) (Gramella forsetii).